The chain runs to 267 residues: 4-hydroxy-tetrahydrodipicolinate reductase (267 aa).

10–15 (GCLGKQ) lines the NAD(+) pocket. An NADP(+)-binding site is contributed by R37. NAD(+) contacts are provided by residues 99–101 (GTT) and 122–125 (TTNV). Residue H154 is the Proton donor/acceptor of the active site. H155 is a (S)-2,3,4,5-tetrahydrodipicolinate binding site. The active-site Proton donor is the K158. Residue 164 to 165 (GT) coordinates (S)-2,3,4,5-tetrahydrodipicolinate.

The protein belongs to the DapB family.

The protein resides in the cytoplasm. The enzyme catalyses (S)-2,3,4,5-tetrahydrodipicolinate + NAD(+) + H2O = (2S,4S)-4-hydroxy-2,3,4,5-tetrahydrodipicolinate + NADH + H(+). It catalyses the reaction (S)-2,3,4,5-tetrahydrodipicolinate + NADP(+) + H2O = (2S,4S)-4-hydroxy-2,3,4,5-tetrahydrodipicolinate + NADPH + H(+). It participates in amino-acid biosynthesis; L-lysine biosynthesis via DAP pathway; (S)-tetrahydrodipicolinate from L-aspartate: step 4/4. Catalyzes the conversion of 4-hydroxy-tetrahydrodipicolinate (HTPA) to tetrahydrodipicolinate. This Ehrlichia chaffeensis (strain ATCC CRL-10679 / Arkansas) protein is 4-hydroxy-tetrahydrodipicolinate reductase.